Reading from the N-terminus, the 316-residue chain is Deoxyribonuclease-1-like 1 (316 aa).

A signal peptide spans 1–28 (MHSSGGFQKAIHGHALLLLLLLASGAET). Residues E107 and H158 contribute to the active site. C197 and C234 are disulfide-bonded. N271 carries N-linked (GlcNAc...) asparagine glycosylation.

The protein belongs to the DNase I family.

The protein resides in the endoplasmic reticulum. The protein is Deoxyribonuclease-1-like 1 (DNASE1L1) of Bos taurus (Bovine).